Reading from the N-terminus, the 609-residue chain is Protein alan shepard (609 aa).

The span at 1 to 12 shows a compositional bias: pro residues; sequence MHPRYSPAPPPL. Positions 1–96 are disordered; that stretch reads MHPRYSPAPP…ASVAAAPPTP (96 aa). Y5 bears the Phosphotyrosine mark. Residues 13–35 show a composition bias toward low complexity; it reads HQQQQQQPPQQQQQQMGGPHQQQ. Over residues 37–50 the composition is skewed to gly residues; that stretch reads GGVGPGTGHGGVGA. Composition is skewed to low complexity over residues 51-68 and 83-92; these read AVGASNAGHMRAPPNSQQ and SSSAASVAAA. A phosphotyrosine mark is found at Y152 and Y168. Residues 190–252 are disordered; that stretch reads PATTTYGQRV…AQNQNQQGGE (63 aa). A compositionally biased stretch (low complexity) spans 204-252; the sequence is SPSNTNSSSSSNTGSQSGTLSTSLSNTTNTNTTMGPNGTAQNQNQQGGE. 2 RRM domains span residues 257–330 and 336–415; these read TNLY…MAKQ and TNLY…FADG. Residues 583-609 form a disordered region; sequence MTDSEQASTAASPDEAYTQYPHQAAPK.

In terms of biological role, has a role in the perception of gravity. The protein is Protein alan shepard of Drosophila grimshawi (Hawaiian fruit fly).